Consider the following 95-residue polypeptide: Co-chaperonin GroES (95 aa).

The protein belongs to the GroES chaperonin family. Heptamer of 7 subunits arranged in a ring. Interacts with the chaperonin GroEL.

The protein localises to the cytoplasm. Together with the chaperonin GroEL, plays an essential role in assisting protein folding. The GroEL-GroES system forms a nano-cage that allows encapsulation of the non-native substrate proteins and provides a physical environment optimized to promote and accelerate protein folding. GroES binds to the apical surface of the GroEL ring, thereby capping the opening of the GroEL channel. This Streptococcus uberis (strain ATCC BAA-854 / 0140J) protein is Co-chaperonin GroES.